The following is a 119-amino-acid chain: Protein TusC (119 aa).

It belongs to the DsrF/TusC family. In terms of assembly, heterohexamer, formed by a dimer of trimers. The hexameric TusBCD complex contains 2 copies each of TusB, TusC and TusD. The TusBCD complex interacts with TusE.

It localises to the cytoplasm. In terms of biological role, part of a sulfur-relay system required for 2-thiolation of 5-methylaminomethyl-2-thiouridine (mnm(5)s(2)U) at tRNA wobble positions. This chain is Protein TusC, found in Serratia proteamaculans (strain 568).